The following is a 166-amino-acid chain: Protein phosphatase 1 regulatory subunit 1A (166 aa).

The residue at position 1 (Met-1) is an N-acetylmethionine. Residues 1 to 166 are disordered; it reads MEQDNSPRKI…SQDSQGASAV (166 aa). The tract at residues 9 to 12 is essential for activity; the sequence is KIQF. A compositionally biased stretch (basic and acidic residues) spans 19–29; it reads PHLDPEAAEQI. Phosphothreonine; by PKA is present on Thr-35. Positions 42–54 are essential for activity; the sequence is TSDQSSPEVDEDR. 4 positions are modified to phosphoserine: Ser-43, Ser-46, Ser-47, and Ser-67. Residues 104–114 are compositionally biased toward low complexity; the sequence is AAEGTGAQESQ. A compositionally biased stretch (basic and acidic residues) spans 143 to 152; it reads AQERRGEEPS. Residues 143 to 166 form an interaction with PPP1R15A region; that stretch reads AQERRGEEPSTAKTSQDSQGASAV. Residues 153 to 166 show a composition bias toward polar residues; that stretch reads TAKTSQDSQGASAV.

Belongs to the protein phosphatase inhibitor 1 family. Interacts with PPP1R15A. Phosphorylation of Thr-35 is required for activity.

Inhibitor of protein-phosphatase 1. This protein may be important in hormonal control of glycogen metabolism. Hormones that elevate intracellular cAMP increase I-1 activity in many tissues. I-1 activation may impose cAMP control over proteins that are not directly phosphorylated by PKA. Following a rise in intracellular calcium, I-1 is inactivated by calcineurin (or PP2B). Does not inhibit type-2 phosphatases. The sequence is that of Protein phosphatase 1 regulatory subunit 1A (PPP1R1A) from Oryctolagus cuniculus (Rabbit).